Here is a 568-residue protein sequence, read N- to C-terminus: Proline--tRNA ligase (568 aa).

The protein belongs to the class-II aminoacyl-tRNA synthetase family. ProS type 1 subfamily. Homodimer.

It localises to the cytoplasm. The catalysed reaction is tRNA(Pro) + L-proline + ATP = L-prolyl-tRNA(Pro) + AMP + diphosphate. In terms of biological role, catalyzes the attachment of proline to tRNA(Pro) in a two-step reaction: proline is first activated by ATP to form Pro-AMP and then transferred to the acceptor end of tRNA(Pro). As ProRS can inadvertently accommodate and process non-cognate amino acids such as alanine and cysteine, to avoid such errors it has two additional distinct editing activities against alanine. One activity is designated as 'pretransfer' editing and involves the tRNA(Pro)-independent hydrolysis of activated Ala-AMP. The other activity is designated 'posttransfer' editing and involves deacylation of mischarged Ala-tRNA(Pro). The misacylated Cys-tRNA(Pro) is not edited by ProRS. The protein is Proline--tRNA ligase of Halothermothrix orenii (strain H 168 / OCM 544 / DSM 9562).